The chain runs to 891 residues: Alanine--tRNA ligase (891 aa).

4 residues coordinate Zn(2+): H564, H568, C678, and H682.

Belongs to the class-II aminoacyl-tRNA synthetase family. The cofactor is Zn(2+).

It is found in the cytoplasm. The catalysed reaction is tRNA(Ala) + L-alanine + ATP = L-alanyl-tRNA(Ala) + AMP + diphosphate. In terms of biological role, catalyzes the attachment of alanine to tRNA(Ala) in a two-step reaction: alanine is first activated by ATP to form Ala-AMP and then transferred to the acceptor end of tRNA(Ala). Also edits incorrectly charged Ser-tRNA(Ala) and Gly-tRNA(Ala) via its editing domain. This Nitrobacter hamburgensis (strain DSM 10229 / NCIMB 13809 / X14) protein is Alanine--tRNA ligase.